Consider the following 123-residue polypeptide: Large ribosomal subunit protein bL12 (123 aa).

It belongs to the bacterial ribosomal protein bL12 family. As to quaternary structure, homodimer. Part of the ribosomal stalk of the 50S ribosomal subunit. Forms a multimeric L10(L12)X complex, where L10 forms an elongated spine to which 2 to 4 L12 dimers bind in a sequential fashion. Binds GTP-bound translation factors.

Forms part of the ribosomal stalk which helps the ribosome interact with GTP-bound translation factors. Is thus essential for accurate translation. The sequence is that of Large ribosomal subunit protein bL12 from Albidiferax ferrireducens (strain ATCC BAA-621 / DSM 15236 / T118) (Rhodoferax ferrireducens).